Reading from the N-terminus, the 212-residue chain is ATP-dependent Clp protease proteolytic subunit (212 aa).

Ser106 (nucleophile) is an active-site residue. Residue His131 is part of the active site.

It belongs to the peptidase S14 family. As to quaternary structure, fourteen ClpP subunits assemble into 2 heptameric rings which stack back to back to give a disk-like structure with a central cavity, resembling the structure of eukaryotic proteasomes.

It is found in the cytoplasm. It catalyses the reaction Hydrolysis of proteins to small peptides in the presence of ATP and magnesium. alpha-casein is the usual test substrate. In the absence of ATP, only oligopeptides shorter than five residues are hydrolyzed (such as succinyl-Leu-Tyr-|-NHMec, and Leu-Tyr-Leu-|-Tyr-Trp, in which cleavage of the -Tyr-|-Leu- and -Tyr-|-Trp bonds also occurs).. In terms of biological role, cleaves peptides in various proteins in a process that requires ATP hydrolysis. Has a chymotrypsin-like activity. Plays a major role in the degradation of misfolded proteins. This is ATP-dependent Clp protease proteolytic subunit from Rhodopseudomonas palustris (strain ATCC BAA-98 / CGA009).